Consider the following 93-residue polypeptide: DNA-directed RNA polymerase subunit omega (93 aa).

Belongs to the RNA polymerase subunit omega family. The RNAP catalytic core consists of 2 alpha, 1 beta, 1 beta' and 1 omega subunit. When a sigma factor is associated with the core the holoenzyme is formed, which can initiate transcription.

It carries out the reaction RNA(n) + a ribonucleoside 5'-triphosphate = RNA(n+1) + diphosphate. Its function is as follows. Promotes RNA polymerase assembly. Latches the N- and C-terminal regions of the beta' subunit thereby facilitating its interaction with the beta and alpha subunits. This Glaesserella parasuis serovar 5 (strain SH0165) (Haemophilus parasuis) protein is DNA-directed RNA polymerase subunit omega.